We begin with the raw amino-acid sequence, 232 residues long: Ribonuclease 3 (232 aa).

Residues 5 to 134 (QTVLKNHFAI…FLGALLLDKD (130 aa)) enclose the RNase III domain. Glutamate 47 contacts Mg(2+). Aspartate 51 is an active-site residue. Residues aspartate 120 and glutamate 123 each coordinate Mg(2+). Glutamate 123 is an active-site residue. Positions 160–229 (DYKTHLQELL…AKNAVEKGLD (70 aa)) constitute a DRBM domain.

It belongs to the ribonuclease III family. Homodimer. Requires Mg(2+) as cofactor.

It is found in the cytoplasm. The enzyme catalyses Endonucleolytic cleavage to 5'-phosphomonoester.. Digests double-stranded RNA. Involved in the processing of primary rRNA transcript to yield the immediate precursors to the large and small rRNAs (23S and 16S). Processes some mRNAs, and tRNAs when they are encoded in the rRNA operon. Processes pre-crRNA and tracrRNA of type II CRISPR loci if present in the organism. This chain is Ribonuclease 3, found in Streptococcus pneumoniae serotype 4 (strain ATCC BAA-334 / TIGR4).